Consider the following 220-residue polypeptide: Protein GrpE (220 aa).

The segment at 1 to 55 (MCGGDVQGQGVASGCDEALERADSLRASDPVPVESGEGSVPGEHSQELETGASEE) is disordered.

It belongs to the GrpE family. In terms of assembly, homodimer.

The protein localises to the cytoplasm. Functionally, participates actively in the response to hyperosmotic and heat shock by preventing the aggregation of stress-denatured proteins, in association with DnaK and GrpE. It is the nucleotide exchange factor for DnaK and may function as a thermosensor. Unfolded proteins bind initially to DnaJ; upon interaction with the DnaJ-bound protein, DnaK hydrolyzes its bound ATP, resulting in the formation of a stable complex. GrpE releases ADP from DnaK; ATP binding to DnaK triggers the release of the substrate protein, thus completing the reaction cycle. Several rounds of ATP-dependent interactions between DnaJ, DnaK and GrpE are required for fully efficient folding. The polypeptide is Protein GrpE (Treponema pallidum (strain Nichols)).